The sequence spans 334 residues: Phosphoribosylformylglycinamidine cyclo-ligase (334 aa).

Belongs to the AIR synthase family.

It is found in the cytoplasm. It catalyses the reaction 2-formamido-N(1)-(5-O-phospho-beta-D-ribosyl)acetamidine + ATP = 5-amino-1-(5-phospho-beta-D-ribosyl)imidazole + ADP + phosphate + H(+). It participates in purine metabolism; IMP biosynthesis via de novo pathway; 5-amino-1-(5-phospho-D-ribosyl)imidazole from N(2)-formyl-N(1)-(5-phospho-D-ribosyl)glycinamide: step 2/2. The protein is Phosphoribosylformylglycinamidine cyclo-ligase of Thermococcus kodakarensis (strain ATCC BAA-918 / JCM 12380 / KOD1) (Pyrococcus kodakaraensis (strain KOD1)).